Here is a 161-residue protein sequence, read N- to C-terminus: Transcriptional repressor NrdR (161 aa).

The span at 1–11 (MRCPSCNSLDT) shows a compositional bias: polar residues. Residues 1-20 (MRCPSCNSLDTQVKDSRPTE) are disordered. Residues 3 to 34 (CPSCNSLDTQVKDSRPTEDSSVIRRRRVCVTC) fold into a zinc finger. The ATP-cone domain occupies 49–139 (LTVIKRNGRR…VYRNFREAKD (91 aa)).

It belongs to the NrdR family. The cofactor is Zn(2+).

Functionally, negatively regulates transcription of bacterial ribonucleotide reductase nrd genes and operons by binding to NrdR-boxes. The sequence is that of Transcriptional repressor NrdR from Bradyrhizobium sp. (strain ORS 278).